The primary structure comprises 294 residues: 1D-myo-inositol 2-acetamido-2-deoxy-alpha-D-glucopyranoside deacetylase (294 aa).

H14, D17, and H149 together coordinate Zn(2+).

This sequence belongs to the MshB deacetylase family. Zn(2+) serves as cofactor.

It catalyses the reaction 1D-myo-inositol 2-acetamido-2-deoxy-alpha-D-glucopyranoside + H2O = 1D-myo-inositol 2-amino-2-deoxy-alpha-D-glucopyranoside + acetate. Its function is as follows. Catalyzes the deacetylation of 1D-myo-inositol 2-acetamido-2-deoxy-alpha-D-glucopyranoside (GlcNAc-Ins) in the mycothiol biosynthesis pathway. The protein is 1D-myo-inositol 2-acetamido-2-deoxy-alpha-D-glucopyranoside deacetylase of Rhodococcus erythropolis (strain PR4 / NBRC 100887).